A 73-amino-acid chain; its full sequence is Exodeoxyribonuclease 7 small subunit (73 aa).

Belongs to the XseB family. In terms of assembly, heterooligomer composed of large and small subunits.

The protein resides in the cytoplasm. The enzyme catalyses Exonucleolytic cleavage in either 5'- to 3'- or 3'- to 5'-direction to yield nucleoside 5'-phosphates.. Its function is as follows. Bidirectionally degrades single-stranded DNA into large acid-insoluble oligonucleotides, which are then degraded further into small acid-soluble oligonucleotides. In Clostridium novyi (strain NT), this protein is Exodeoxyribonuclease 7 small subunit.